The primary structure comprises 343 residues: Dihydroorotase (343 aa).

Positions 14 and 16 each coordinate Zn(2+). Residues His16–Arg18 and Asn42 contribute to the substrate site. Zn(2+)-binding residues include Lys100, His137, and His175. Lys100 bears the N6-carboxylysine mark. Substrate is bound at residue His137. Leu220 lines the substrate pocket. Asp248 contacts Zn(2+). Asp248 is an active-site residue. Substrate-binding residues include His252 and Ala264.

This sequence belongs to the metallo-dependent hydrolases superfamily. DHOase family. Class II DHOase subfamily. As to quaternary structure, homodimer. It depends on Zn(2+) as a cofactor.

It carries out the reaction (S)-dihydroorotate + H2O = N-carbamoyl-L-aspartate + H(+). It participates in pyrimidine metabolism; UMP biosynthesis via de novo pathway; (S)-dihydroorotate from bicarbonate: step 3/3. Its function is as follows. Catalyzes the reversible cyclization of carbamoyl aspartate to dihydroorotate. The polypeptide is Dihydroorotase (Parasynechococcus marenigrum (strain WH8102)).